Consider the following 969-residue polypeptide: Putative zinc protease mug138 (969 aa).

His-68 is a Zn(2+) binding site. The active-site Proton acceptor is Glu-71. Positions 72 and 149 each coordinate Zn(2+).

This sequence belongs to the peptidase M16 family.

Its subcellular location is the cytoplasm. Its function is as follows. Has a role in meiosis. The sequence is that of Putative zinc protease mug138 (mug138) from Schizosaccharomyces pombe (strain 972 / ATCC 24843) (Fission yeast).